The primary structure comprises 346 residues: Putative serine/threonine-protein kinase K06H7.1 (346 aa).

The region spanning 20 to 287 is the Protein kinase domain; that stretch reads YKVVQKLGEG…KLFKLLEDVM (268 aa). ATP-binding positions include 26-34 and K50; that span reads LGEGGCGSV. Catalysis depends on D141, which acts as the Proton acceptor. Positions 302-326 are disordered; the sequence is PEKKKNPASQGNKFGLGKKGTKESG.

This sequence belongs to the protein kinase superfamily. Ser/Thr protein kinase family.

The enzyme catalyses L-seryl-[protein] + ATP = O-phospho-L-seryl-[protein] + ADP + H(+). It catalyses the reaction L-threonyl-[protein] + ATP = O-phospho-L-threonyl-[protein] + ADP + H(+). This chain is Putative serine/threonine-protein kinase K06H7.1, found in Caenorhabditis elegans.